The primary structure comprises 256 residues: 3-deoxy-manno-octulosonate cytidylyltransferase (256 aa).

Belongs to the KdsB family.

It is found in the cytoplasm. The enzyme catalyses 3-deoxy-alpha-D-manno-oct-2-ulosonate + CTP = CMP-3-deoxy-beta-D-manno-octulosonate + diphosphate. It participates in nucleotide-sugar biosynthesis; CMP-3-deoxy-D-manno-octulosonate biosynthesis; CMP-3-deoxy-D-manno-octulosonate from 3-deoxy-D-manno-octulosonate and CTP: step 1/1. The protein operates within bacterial outer membrane biogenesis; lipopolysaccharide biosynthesis. In terms of biological role, activates KDO (a required 8-carbon sugar) for incorporation into bacterial lipopolysaccharide in Gram-negative bacteria. The sequence is that of 3-deoxy-manno-octulosonate cytidylyltransferase from Histophilus somni (strain 2336) (Haemophilus somnus).